The following is a 490-amino-acid chain: UDP-glycosyltransferase 86A1 (490 aa).

Residues Ser294, Cys352–Gln354, His369–Glu377, and Leu391–Gln394 each bind UDP-alpha-D-glucose.

It belongs to the UDP-glycosyltransferase family.

This chain is UDP-glycosyltransferase 86A1 (UGT86A1), found in Arabidopsis thaliana (Mouse-ear cress).